Reading from the N-terminus, the 467-residue chain is Asparagine--tRNA ligase (467 aa).

Belongs to the class-II aminoacyl-tRNA synthetase family. As to quaternary structure, homodimer.

Its subcellular location is the cytoplasm. It catalyses the reaction tRNA(Asn) + L-asparagine + ATP = L-asparaginyl-tRNA(Asn) + AMP + diphosphate + H(+). This is Asparagine--tRNA ligase from Mannheimia succiniciproducens (strain KCTC 0769BP / MBEL55E).